The following is a 172-amino-acid chain: MAEKRNIFLVGPMGAGKSTIGRHLAQQLHMEFLDSDTVIEERTGADIAWVFDVEGEEGFRIREEGVINDLTQEQGIVLATGGGSVISKESRNRLSARGVVVYLETTIEKQLARTQRDKKRPLLQTDEPREVLEALAKERNALYEEVSDYVVRTDDQSAKVVANQIIQMLEER.

Residue 14-19 coordinates ATP; it reads GAGKST. Mg(2+) is bound at residue Ser-18. Asp-36, Arg-60, and Gly-82 together coordinate substrate. Arg-120 contacts ATP. Position 139 (Arg-139) interacts with substrate. An ATP-binding site is contributed by Gln-156.

Belongs to the shikimate kinase family. In terms of assembly, monomer. It depends on Mg(2+) as a cofactor.

It is found in the cytoplasm. The enzyme catalyses shikimate + ATP = 3-phosphoshikimate + ADP + H(+). It functions in the pathway metabolic intermediate biosynthesis; chorismate biosynthesis; chorismate from D-erythrose 4-phosphate and phosphoenolpyruvate: step 5/7. Functionally, catalyzes the specific phosphorylation of the 3-hydroxyl group of shikimic acid using ATP as a cosubstrate. The chain is Shikimate kinase from Aliivibrio salmonicida (strain LFI1238) (Vibrio salmonicida (strain LFI1238)).